Here is a 1077-residue protein sequence, read N- to C-terminus: Teashirt homolog 1 (1077 aa).

Disordered stretches follow at residues 1–109, 139–195, and 269–298; these read MPRR…VSYP, SGST…SSSS, and GHYR…MEME. Acidic residues predominate over residues 26 to 36; the sequence is IDEEHVEDDGL. 2 stretches are compositionally biased toward polar residues: residues 57 to 71 and 139 to 152; these read QSYQ…TNQD and SGST…SQKE. A compositionally biased stretch (low complexity) spans 164 to 195; sequence PVSTTGPTTSTPSTSCSSSTSHSSTTSTSSSS. 2 consecutive C2H2-type zinc fingers follow at residues 246–270 and 307–331; these read FRCK…ETGH and LKCM…KTKH. Residues 269–284 show a composition bias toward basic and acidic residues; it reads GHYRDDNRDKDSEKTK. The C2H2-type 3; atypical zinc finger occupies 416-440; that stretch reads LKCMECGSSHDTLQQLTAHMMVTGH. 2 disordered regions span residues 467 to 549 and 647 to 720; these read SIPL…KGGL and TGKV…EPLK. 3 stretches are compositionally biased toward basic and acidic residues: residues 496–528, 647–665, and 675–708; these read SEEK…EKFE, TGKV…EKSS, and KENK…EGPL. Phosphoserine is present on serine 765. Positions 848 to 873 are disordered; that stretch reads TGRLTPKSSTPSTVSEKSDADGSSFE. Over residues 853 to 862 the composition is skewed to polar residues; sequence PKSSTPSTVS. The homeobox; atypical DNA-binding region spans 885–955; sequence RKGRQSNWNP…NVKYQLRRTG (71 aa). 2 consecutive C2H2-type zinc fingers follow at residues 970–992 and 1037–1060; these read FFCN…LETH and FQCK…SKTH.

It belongs to the teashirt C2H2-type zinc-finger protein family. In terms of assembly, interacts (via homeobox domain) with APBB1 (via PID domain 1). In terms of tissue distribution, expressed in brain; strongly reduced in post-mortem elderly subjects with Alzheimer disease.

It is found in the nucleus. Functionally, probable transcriptional regulator involved in developmental processes. May act as a transcriptional repressor (Potential). The sequence is that of Teashirt homolog 1 (TSHZ1) from Homo sapiens (Human).